Here is a 294-residue protein sequence, read N- to C-terminus: tRNA dimethylallyltransferase (294 aa).

10–17 (GPTAVGKT) provides a ligand contact to ATP. 12–17 (TAVGKT) lines the substrate pocket. The interval 35–38 (DSQQ) is interaction with substrate tRNA.

Belongs to the IPP transferase family. Monomer. The cofactor is Mg(2+).

It catalyses the reaction adenosine(37) in tRNA + dimethylallyl diphosphate = N(6)-dimethylallyladenosine(37) in tRNA + diphosphate. Catalyzes the transfer of a dimethylallyl group onto the adenine at position 37 in tRNAs that read codons beginning with uridine, leading to the formation of N6-(dimethylallyl)adenosine (i(6)A). This Streptococcus suis (strain 05ZYH33) protein is tRNA dimethylallyltransferase.